A 280-amino-acid chain; its full sequence is MSSSLQELCRKKLPDCILPEFFDDYVLQLLGLHWQDHGSLQRIEKNQILVQQEPIHINEALKVAASEGNYEIVELLLSWEADPRYAVVGALESKYYDLVHKYYGQVKDCHDILPLIQNPETFEKCHELNSTCSLKCLFKHAVMNDMLPILEKYTDYLDRWEYCSQMLFELACRKKKYEMVVWIEGVLCVGKVTSLFTIAISNRDLQLYSLGYSIILEKMYSCRQDPTFLLNHFLRDVSIKGLLPFVLKTIEYGGSKEIAITLAKKYQHKHILKYFETWES.

The protein belongs to the asfivirus MGF 505 family.

In terms of biological role, plays a role in virus cell tropism, and may be required for efficient virus replication in macrophages. The polypeptide is Protein MGF 505-3R (Ornithodoros (relapsing fever ticks)).